A 135-amino-acid polypeptide reads, in one-letter code: Transcription antitermination protein NusB (135 aa).

It belongs to the NusB family.

Its function is as follows. Involved in transcription antitermination. Required for transcription of ribosomal RNA (rRNA) genes. Binds specifically to the boxA antiterminator sequence of the ribosomal RNA (rrn) operons. In Clostridium perfringens (strain ATCC 13124 / DSM 756 / JCM 1290 / NCIMB 6125 / NCTC 8237 / Type A), this protein is Transcription antitermination protein NusB.